We begin with the raw amino-acid sequence, 218 residues long: Cytidylate kinase (218 aa).

11–19 (GPSGVGKST) lines the ATP pocket.

The protein belongs to the cytidylate kinase family. Type 1 subfamily.

Its subcellular location is the cytoplasm. It catalyses the reaction CMP + ATP = CDP + ADP. It carries out the reaction dCMP + ATP = dCDP + ADP. In Mycoplasmopsis synoviae (strain 53) (Mycoplasma synoviae), this protein is Cytidylate kinase.